The primary structure comprises 174 residues: Transcription antitermination protein NusB (174 aa).

The protein belongs to the NusB family.

Involved in transcription antitermination. Required for transcription of ribosomal RNA (rRNA) genes. Binds specifically to the boxA antiterminator sequence of the ribosomal RNA (rrn) operons. The chain is Transcription antitermination protein NusB from Rhodopseudomonas palustris (strain ATCC BAA-98 / CGA009).